A 328-amino-acid polypeptide reads, in one-letter code: C-type lectin domain family 4 member K (328 aa).

The Cytoplasmic segment spans residues 1-43 (MTVEKEAPDAHFTVDKQNISLWPREPPPKSGPSLVPGKTPTVR). The chain crosses the membrane as a helical; Signal-anchor for type II membrane protein span at residues 44-64 (AALICLTLVLVASVLLQAVLY). At 65–328 (PRFMGTISDV…CKRPYVPSEP (264 aa)) the chain is on the extracellular side. N87, N113, and N180 each carry an N-linked (GlcNAc...) asparagine glycan. A coiled-coil region spans residues 145 to 190 (EEVSTLNAQIPELKSDLEKASALNTKIRALQGSLENMSKLLKRQND). Positions 202–320 (FKGNFYYFSL…CDKTFLFICK (119 aa)) constitute a C-type lectin domain. Cystine bridges form between C223/C319 and C295/C311.

Homotrimer. As to expression, exclusively expressed by Langerhans cells. Expressed in astrocytoma and malignant ependymoma, but not in normal brain tissues.

It localises to the membrane. Its function is as follows. Calcium-dependent lectin displaying mannose-binding specificity. Induces the formation of Birbeck granules (BGs); is a potent regulator of membrane superimposition and zippering. Binds to sulfated as well as mannosylated glycans, keratan sulfate (KS) and beta-glucans. Facilitates uptake of antigens and is involved in the routing and/or processing of antigen for presentation to T cells. Major receptor on primary Langerhans cells for Candida species, Saccharomyces species, and Malassezia furfur. Protects against human immunodeficiency virus-1 (HIV-1) infection. Binds to high-mannose structures present on the envelope glycoprotein which is followed by subsequent targeting of the virus to the Birbeck granules leading to its rapid degradation. The sequence is that of C-type lectin domain family 4 member K (CD207) from Homo sapiens (Human).